Consider the following 240-residue polypeptide: Sugar fermentation stimulation protein homolog (240 aa).

Belongs to the SfsA family.

This Saccharolobus islandicus (strain L.S.2.15 / Lassen #1) (Sulfolobus islandicus) protein is Sugar fermentation stimulation protein homolog.